Consider the following 1295-residue polypeptide: DNA-directed RNA polymerase subunit beta' (1295 aa).

Zn(2+) is bound by residues Cys-66, Cys-68, Cys-81, and Cys-84. Positions 562, 564, and 566 each coordinate Mg(2+). Zn(2+) contacts are provided by Cys-901, Cys-975, Cys-982, and Cys-985.

It belongs to the RNA polymerase beta' chain family. As to quaternary structure, the RNAP catalytic core consists of 2 alpha, 1 beta, 1 beta' and 1 omega subunit. When a sigma factor is associated with the core the holoenzyme is formed, which can initiate transcription. It depends on Mg(2+) as a cofactor. Requires Zn(2+) as cofactor.

The catalysed reaction is RNA(n) + a ribonucleoside 5'-triphosphate = RNA(n+1) + diphosphate. DNA-dependent RNA polymerase catalyzes the transcription of DNA into RNA using the four ribonucleoside triphosphates as substrates. The polypeptide is DNA-directed RNA polymerase subunit beta' (Rubrobacter xylanophilus (strain DSM 9941 / JCM 11954 / NBRC 16129 / PRD-1)).